Consider the following 194-residue polypeptide: Thymidine kinase (194 aa).

ATP contacts are provided by residues 15 to 22 and 88 to 91; these read GSMFSGKS and DEVQ. The active-site Proton acceptor is Glu-89. Zn(2+)-binding residues include Cys-145, Cys-148, Cys-183, and Cys-186.

The protein belongs to the thymidine kinase family. Homotetramer.

The protein resides in the cytoplasm. The catalysed reaction is thymidine + ATP = dTMP + ADP + H(+). This Bacillus anthracis (strain A0248) protein is Thymidine kinase.